The primary structure comprises 153 residues: uncharacterized protein (153 aa).

The next 2 helical transmembrane spans lie at 16–36 and 97–117; these read ILACLLLIFLMATIFLLILEI and ALTTTLSIILLVCIIMACIIC.

Its subcellular location is the membrane. This is an uncharacterized protein from Human herpesvirus 6A (strain Uganda-1102) (HHV-6 variant A).